A 475-amino-acid chain; its full sequence is Ribulose bisphosphate carboxylase large chain (475 aa).

Positions 1–2 (MS) are excised as a propeptide. Proline 3 carries the N-acetylproline modification. Lysine 14 is subject to N6,N6,N6-trimethyllysine. Substrate-binding residues include asparagine 123 and threonine 173. The active-site Proton acceptor is lysine 175. Residue lysine 177 coordinates substrate. Mg(2+) contacts are provided by lysine 201, aspartate 203, and glutamate 204. Lysine 201 is subject to N6-carboxylysine. Histidine 294 serves as the catalytic Proton acceptor. 3 residues coordinate substrate: arginine 295, histidine 327, and serine 379.

It belongs to the RuBisCO large chain family. Type I subfamily. Heterohexadecamer of 8 large chains and 8 small chains; disulfide-linked. The disulfide link is formed within the large subunit homodimers. The cofactor is Mg(2+). Post-translationally, the disulfide bond which can form in the large chain dimeric partners within the hexadecamer appears to be associated with oxidative stress and protein turnover.

The protein resides in the plastid. The protein localises to the chloroplast. It catalyses the reaction 2 (2R)-3-phosphoglycerate + 2 H(+) = D-ribulose 1,5-bisphosphate + CO2 + H2O. The enzyme catalyses D-ribulose 1,5-bisphosphate + O2 = 2-phosphoglycolate + (2R)-3-phosphoglycerate + 2 H(+). In terms of biological role, ruBisCO catalyzes two reactions: the carboxylation of D-ribulose 1,5-bisphosphate, the primary event in carbon dioxide fixation, as well as the oxidative fragmentation of the pentose substrate in the photorespiration process. Both reactions occur simultaneously and in competition at the same active site. The polypeptide is Ribulose bisphosphate carboxylase large chain (Amborella trichopoda).